The primary structure comprises 278 residues: Large ribosomal subunit protein uL2 (278 aa).

Disordered regions lie at residues 1 to 58 and 225 to 278; these read MAIR…GGGH and VMNP…KNKR. The span at 37–58 shows a compositional bias: basic residues; that stretch reads LHGRGGRNAHGRITTRHKGGGH. Basic and acidic residues predominate over residues 253 to 267; the sequence is PEGRTRKNKASDKLI. Residues 268-278 show a composition bias toward basic residues; sequence VRRRRTGKNKR.

The protein belongs to the universal ribosomal protein uL2 family. Part of the 50S ribosomal subunit. Forms a bridge to the 30S subunit in the 70S ribosome.

One of the primary rRNA binding proteins. Required for association of the 30S and 50S subunits to form the 70S ribosome, for tRNA binding and peptide bond formation. It has been suggested to have peptidyltransferase activity; this is somewhat controversial. Makes several contacts with the 16S rRNA in the 70S ribosome. This is Large ribosomal subunit protein uL2 from Rhodococcus opacus (strain B4).